The chain runs to 314 residues: 4-hydroxy-3-methylbut-2-enyl diphosphate reductase (314 aa).

Cys-12 provides a ligand contact to [4Fe-4S] cluster. Residues His-41 and His-74 each coordinate (2E)-4-hydroxy-3-methylbut-2-enyl diphosphate. Positions 41 and 74 each coordinate dimethylallyl diphosphate. Residues His-41 and His-74 each contribute to the isopentenyl diphosphate site. Cys-96 serves as a coordination point for [4Fe-4S] cluster. His-124 serves as a coordination point for (2E)-4-hydroxy-3-methylbut-2-enyl diphosphate. Position 124 (His-124) interacts with dimethylallyl diphosphate. His-124 contributes to the isopentenyl diphosphate binding site. The active-site Proton donor is Glu-126. Position 167 (Thr-167) interacts with (2E)-4-hydroxy-3-methylbut-2-enyl diphosphate. A [4Fe-4S] cluster-binding site is contributed by Cys-197. 4 residues coordinate (2E)-4-hydroxy-3-methylbut-2-enyl diphosphate: Ser-225, Ser-226, Asn-227, and Ser-269. Ser-225, Ser-226, Asn-227, and Ser-269 together coordinate dimethylallyl diphosphate. Ser-225, Ser-226, Asn-227, and Ser-269 together coordinate isopentenyl diphosphate.

It belongs to the IspH family. [4Fe-4S] cluster serves as cofactor.

It catalyses the reaction isopentenyl diphosphate + 2 oxidized [2Fe-2S]-[ferredoxin] + H2O = (2E)-4-hydroxy-3-methylbut-2-enyl diphosphate + 2 reduced [2Fe-2S]-[ferredoxin] + 2 H(+). The enzyme catalyses dimethylallyl diphosphate + 2 oxidized [2Fe-2S]-[ferredoxin] + H2O = (2E)-4-hydroxy-3-methylbut-2-enyl diphosphate + 2 reduced [2Fe-2S]-[ferredoxin] + 2 H(+). It participates in isoprenoid biosynthesis; dimethylallyl diphosphate biosynthesis; dimethylallyl diphosphate from (2E)-4-hydroxy-3-methylbutenyl diphosphate: step 1/1. It functions in the pathway isoprenoid biosynthesis; isopentenyl diphosphate biosynthesis via DXP pathway; isopentenyl diphosphate from 1-deoxy-D-xylulose 5-phosphate: step 6/6. Catalyzes the conversion of 1-hydroxy-2-methyl-2-(E)-butenyl 4-diphosphate (HMBPP) into a mixture of isopentenyl diphosphate (IPP) and dimethylallyl diphosphate (DMAPP). Acts in the terminal step of the DOXP/MEP pathway for isoprenoid precursor biosynthesis. This chain is 4-hydroxy-3-methylbut-2-enyl diphosphate reductase, found in Haemophilus influenzae (strain 86-028NP).